Consider the following 254-residue polypeptide: Type III pantothenate kinase (254 aa).

7-14 contacts ATP; it reads DIGNTRLK. Residues tyrosine 97 and 104–107 each bind substrate; that span reads GSDR. The active-site Proton acceptor is the aspartate 106. Threonine 134 provides a ligand contact to ATP. Residue threonine 184 participates in substrate binding.

It belongs to the type III pantothenate kinase family. Homodimer. It depends on NH4(+) as a cofactor. K(+) serves as cofactor.

The protein resides in the cytoplasm. The enzyme catalyses (R)-pantothenate + ATP = (R)-4'-phosphopantothenate + ADP + H(+). It participates in cofactor biosynthesis; coenzyme A biosynthesis; CoA from (R)-pantothenate: step 1/5. Functionally, catalyzes the phosphorylation of pantothenate (Pan), the first step in CoA biosynthesis. This is Type III pantothenate kinase from Methylibium petroleiphilum (strain ATCC BAA-1232 / LMG 22953 / PM1).